The primary structure comprises 277 residues: Diaminopimelate epimerase (277 aa).

Substrate is bound by residues N13, Q46, and N66. C75 (proton donor) is an active-site residue. Substrate is bound by residues 76-77 (GN), N160, N193, and 211-212 (ER). The active-site Proton acceptor is the C220. 221–222 (GS) contacts substrate.

This sequence belongs to the diaminopimelate epimerase family. Homodimer.

It localises to the cytoplasm. The enzyme catalyses (2S,6S)-2,6-diaminopimelate = meso-2,6-diaminopimelate. Its pathway is amino-acid biosynthesis; L-lysine biosynthesis via DAP pathway; DL-2,6-diaminopimelate from LL-2,6-diaminopimelate: step 1/1. Its function is as follows. Catalyzes the stereoinversion of LL-2,6-diaminopimelate (L,L-DAP) to meso-diaminopimelate (meso-DAP), a precursor of L-lysine and an essential component of the bacterial peptidoglycan. The sequence is that of Diaminopimelate epimerase from Legionella pneumophila subsp. pneumophila (strain Philadelphia 1 / ATCC 33152 / DSM 7513).